The chain runs to 158 residues: Pathogenesis-related protein 1 (158 aa).

Belongs to the BetVI family.

Its subcellular location is the cytoplasm. The polypeptide is Pathogenesis-related protein 1 (PR1) (Asparagus officinalis (Garden asparagus)).